We begin with the raw amino-acid sequence, 188 residues long: Achaete-scute homolog 5 (188 aa).

Residues 80 to 93 (AFIQKRNERERQRV) are basic motif. The 53-residue stretch at 80-132 (AFIQKRNERERQRVKCVNEGYARLRGHLPGALTEKRLSKVETLRAAIRYIKYL) folds into the bHLH domain. The interval 94–132 (KCVNEGYARLRGHLPGALTEKRLSKVETLRAAIRYIKYL) is helix-loop-helix motif. The interval 139-188 (TPDGAPPPATSPPPAHTGHSNVPQPSSLVAESSGSPFSSSPFLESEEPSL) is disordered. Positions 142–153 (GAPPPATSPPPA) are enriched in pro residues. Positions 158-168 (SNVPQPSSLVA) are enriched in polar residues. Positions 169–181 (ESSGSPFSSSPFL) are enriched in low complexity.

Interacts with transcription factor TCF3/E12. As to expression, expressed in teeth (at protein level).

The protein localises to the nucleus. In terms of biological role, transcription factor. Probably binds E-box motifs 5'-CANNTG-3' in complex with transcription factor TCF3/E12. Negatively modulates transcription of target genes such as CDH1/E-cadherin, perhaps by recruiting the PRC2 repressive complex to regulatory elements. Regulates ameloblast development and tooth germ growth, perhaps acting by positively modulating migration of inner enamel epithelium (IEE) cells. Plays a role in enamel formation. The protein is Achaete-scute homolog 5 of Mus musculus (Mouse).